Here is a 199-residue protein sequence, read N- to C-terminus: Probable molybdenum cofactor guanylyltransferase (199 aa).

Residues 8 to 10 (LAG), Lys20, Asp65, and Asp96 contribute to the GTP site. Residue Asp96 participates in Mg(2+) binding.

It belongs to the MobA family. The cofactor is Mg(2+).

It localises to the cytoplasm. It catalyses the reaction Mo-molybdopterin + GTP + H(+) = Mo-molybdopterin guanine dinucleotide + diphosphate. Its function is as follows. Transfers a GMP moiety from GTP to Mo-molybdopterin (Mo-MPT) cofactor (Moco or molybdenum cofactor) to form Mo-molybdopterin guanine dinucleotide (Mo-MGD) cofactor. This chain is Probable molybdenum cofactor guanylyltransferase, found in Bacillus subtilis (strain 168).